A 176-amino-acid chain; its full sequence is Inner membrane protein p54 (176 aa).

The chain crosses the membrane as a helical span at residues 32–52; the sequence is YTILIAIVVLIIIIIVLIYLF. The segment at 82 to 176 is disordered; that stretch reads VTPQPGIAKP…YTHKDLENSL (95 aa). The span at 123–154 shows a compositional bias: low complexity; it reads GMAAGGPAAASAPAHPAELYTTATTQNTASQT. Residues 142-154 form an interaction with host DYNLL1 region; it reads YTTATTQNTASQT.

Belongs to the asfivirus envelope protein p54 family. In terms of assembly, interacts with the host light chain cytoplasmic dynein DYNLL1; this interaction is critical for intracellular microtubule-dependent virus transport toward viral factories.

The protein localises to the virion membrane. The protein resides in the host cytoplasm. It is found in the host cytoskeleton. Its subcellular location is the host endoplasmic reticulum membrane. Functionally, inner envelope protein involved, through its interaction with host dynein, in the intracellular microtubule-dependent transport of viral capsid toward viral factories. Seems to induce caspase-3 activation and apoptosis. Plays a role in virion morphogenesis by recruiting and transforming the host ER membranes into the precursors of the viral envelope. Involved in virus attachment to the host cell. This chain is Inner membrane protein p54, found in African swine fever virus (isolate Tick/Malawi/Lil 20-1/1983) (ASFV).